The chain runs to 84 residues: Large ribosomal subunit protein bL27 (84 aa).

The segment at 1–22 is disordered; the sequence is MAHKKAGGSTRNGRDSESKRLG.

This sequence belongs to the bacterial ribosomal protein bL27 family.

In Shewanella frigidimarina (strain NCIMB 400), this protein is Large ribosomal subunit protein bL27.